The following is a 198-amino-acid chain: Glycerol-3-phosphate acyltransferase (198 aa).

A run of 6 helical transmembrane segments spans residues 1–21 (MNLL…GYLA), 55–75 (VFLL…YLLL), 79–99 (WQVA…WLNW), 111–131 (IFLG…IIMI), 136–156 (IVSL…FLSF), and 158–178 (GSNL…LVIW).

It belongs to the PlsY family. In terms of assembly, probably interacts with PlsX.

Its subcellular location is the cell inner membrane. It carries out the reaction an acyl phosphate + sn-glycerol 3-phosphate = a 1-acyl-sn-glycero-3-phosphate + phosphate. Its pathway is lipid metabolism; phospholipid metabolism. Functionally, catalyzes the transfer of an acyl group from acyl-phosphate (acyl-PO(4)) to glycerol-3-phosphate (G3P) to form lysophosphatidic acid (LPA). This enzyme utilizes acyl-phosphate as fatty acyl donor, but not acyl-CoA or acyl-ACP. This Prochlorococcus marinus (strain NATL2A) protein is Glycerol-3-phosphate acyltransferase.